Here is a 159-residue protein sequence, read N- to C-terminus: Protein-export protein SecB (159 aa).

The protein belongs to the SecB family. Homotetramer, a dimer of dimers. One homotetramer interacts with 1 SecA dimer.

It localises to the cytoplasm. In terms of biological role, one of the proteins required for the normal export of preproteins out of the cell cytoplasm. It is a molecular chaperone that binds to a subset of precursor proteins, maintaining them in a translocation-competent state. It also specifically binds to its receptor SecA. In Marinomonas sp. (strain MWYL1), this protein is Protein-export protein SecB.